The following is a 67-amino-acid chain: Preprofallaxidin-1 (67 aa).

The first 22 residues, 1–22 (MASLKKSLFLVLFLGMVSLSIC), serve as a signal peptide directing secretion. Positions 23–46 (DKEKREGENEEEEEEHEEESEEKR) are excised as a propeptide. Residues 24–46 (KEKREGENEEEEEEHEEESEEKR) form a disordered region. The span at 30–42 (ENEEEEEEHEEES) shows a compositional bias: acidic residues.

In terms of tissue distribution, expressed by the skin glands.

The protein resides in the secreted. Fallaxidin-4.1 shows antibacterial activity against the Gram-positive bacteria L.lactis (MIC=12 uM), M.luteus (MIC=100 uM), S.epidermidis (MIC=100 uM) and S.uberis (MIC=50 uM). No antibacterial activity against the Gram-positive bacteria B.cereus, E.faecalis, L.innocua, S.aureus, or the Gram-negative bacteria E.cloacae and E.coli. Inhibits the formation of NO by neuronal nitric oxide synthase with an IC(50) of 13.3 uM. In Litoria fallax (Eastern dwarf tree frog), this protein is Preprofallaxidin-1.